Consider the following 373-residue polypeptide: Capsular polysaccharide phosphotransferase (373 aa).

This sequence belongs to the stealth family.

Its function is as follows. Part of a capsule gene locus. Expression was not detected under standard growth conditions. This is Capsular polysaccharide phosphotransferase from Neisseria meningitidis serogroup B.